An 855-amino-acid polypeptide reads, in one-letter code: Probable inactive ATP-dependent zinc metalloprotease FTSHI 4, chloroplastic (855 aa).

A chloroplast-targeting transit peptide spans 1 to 78; it reads MTFYISSSLT…SFESTESSVS (78 aa). Residues 242–262 traverse the membrane as a helical segment; sequence VATFVVWSMRLALFVSLYVWI. 356–363 contacts ATP; sequence GPPGTGKT.

This sequence belongs to the AAA ATPase family. Homooligomer. Interacts with FtsHi2. As to expression, ubiquitous but preferentially expressed in young leaves.

It localises to the plastid. The protein localises to the chloroplast thylakoid membrane. Functionally, functions in chloroplast biogenesis and chloroplast division. Required for plastid development during embryogenesis. Might be involved in chaperone functions or play a structural role in the thylakoid FtsH complex. In Arabidopsis thaliana (Mouse-ear cress), this protein is Probable inactive ATP-dependent zinc metalloprotease FTSHI 4, chloroplastic.